Reading from the N-terminus, the 312-residue chain is Protoheme IX farnesyltransferase 2 (312 aa).

The next 8 helical transmembrane spans lie at 31–51, 52–72, 119–139, 152–172, 179–199, 225–245, 247–267, and 283–303; these read VMSLVIFTALVGLMIAPGHIH, PVLGFIAILCIAVGAGASGAL, ALVNWYAGGLLAFTIFFYVVI, IVIGGAAGALPPVVAWAAATG, LLLFLIIFFWTPPHFWALALF, ILLYTIVLVAIAAAPWPLGYF, WVYGVTSLILGAGMLVLAIEV, and LFAFSILYLFALFAVLLLDVV.

This sequence belongs to the UbiA prenyltransferase family. Protoheme IX farnesyltransferase subfamily.

The protein resides in the cell inner membrane. The enzyme catalyses heme b + (2E,6E)-farnesyl diphosphate + H2O = Fe(II)-heme o + diphosphate. It functions in the pathway porphyrin-containing compound metabolism; heme O biosynthesis; heme O from protoheme: step 1/1. Converts heme B (protoheme IX) to heme O by substitution of the vinyl group on carbon 2 of heme B porphyrin ring with a hydroxyethyl farnesyl side group. This chain is Protoheme IX farnesyltransferase 2, found in Nitrobacter winogradskyi (strain ATCC 25391 / DSM 10237 / CIP 104748 / NCIMB 11846 / Nb-255).